A 170-amino-acid polypeptide reads, in one-letter code: Acireductone dioxygenase (170 aa).

The Fe(2+) site is built by His-99, His-101, Glu-105, and His-144. Positions 99, 101, 105, and 144 each coordinate Ni(2+).

The protein belongs to the acireductone dioxygenase (ARD) family. In terms of assembly, monomer. Fe(2+) serves as cofactor. The cofactor is Ni(2+).

The enzyme catalyses 1,2-dihydroxy-5-(methylsulfanyl)pent-1-en-3-one + O2 = 3-(methylsulfanyl)propanoate + CO + formate + 2 H(+). It catalyses the reaction 1,2-dihydroxy-5-(methylsulfanyl)pent-1-en-3-one + O2 = 4-methylsulfanyl-2-oxobutanoate + formate + 2 H(+). The protein operates within amino-acid biosynthesis; L-methionine biosynthesis via salvage pathway; L-methionine from S-methyl-5-thio-alpha-D-ribose 1-phosphate: step 5/6. Its function is as follows. Catalyzes 2 different reactions between oxygen and the acireductone 1,2-dihydroxy-3-keto-5-methylthiopentene (DHK-MTPene) depending upon the metal bound in the active site. Fe-containing acireductone dioxygenase (Fe-ARD) produces formate and 2-keto-4-methylthiobutyrate (KMTB), the alpha-ketoacid precursor of methionine in the methionine recycle pathway. Ni-containing acireductone dioxygenase (Ni-ARD) produces methylthiopropionate, carbon monoxide and formate, and does not lie on the methionine recycle pathway. In Bacillus thuringiensis (strain Al Hakam), this protein is Acireductone dioxygenase.